Consider the following 225-residue polypeptide: Protein-L-isoaspartate O-methyltransferase (225 aa).

Serine 75 is a catalytic residue.

Belongs to the methyltransferase superfamily. L-isoaspartyl/D-aspartyl protein methyltransferase family.

The protein resides in the cytoplasm. The enzyme catalyses [protein]-L-isoaspartate + S-adenosyl-L-methionine = [protein]-L-isoaspartate alpha-methyl ester + S-adenosyl-L-homocysteine. Catalyzes the methyl esterification of L-isoaspartyl residues in peptides and proteins that result from spontaneous decomposition of normal L-aspartyl and L-asparaginyl residues. It plays a role in the repair and/or degradation of damaged proteins. This is Protein-L-isoaspartate O-methyltransferase from Xylella fastidiosa (strain 9a5c).